We begin with the raw amino-acid sequence, 297 residues long: MSSPFQQILTTTSATNAIAASSAVPVECLHARGANSLASNAHTVLPGLDSQASPQSGQKEEMRRKNAEAQMQNDSNHSETTLFQSDLDTALQSLGYGSQTNQAYQNHPSRSREDITNSRAERHSQTSTQPKNVHAVSEPMATTSLDCGVLPLPSSALDEEFLNLDFPNQERIYIDLEPQHSNSTSSSSDEKCHCLSHIIQSLNRNRQGNHIRRDSMNKIHLLNEAAEQFLMCDSNHSKLWYIILLALYQDADDSLSSAEEPQERMGAHSGAKGFCGNIKSNLDTMVCHASLAWILNG.

Disordered regions lie at residues Leu-45–Thr-80 and Thr-100–His-134. The segment covering Gln-58 to Ala-67 has biased composition (basic and acidic residues). Residues Ala-69–Thr-80 show a composition bias toward polar residues. Residues Arg-110–Ser-124 show a composition bias toward basic and acidic residues.

It localises to the nucleus. Functionally, probable transcription factor; part of the gene cluster that mediates the biosynthesis of the secondary metabolite victorin, the molecular basis for Victoria blight of oats. May play a role in the regulation of the production of victorin. This chain is Probable transcription factor vicR, found in Bipolaris victoriae (strain FI3) (Victoria blight of oats agent).